Reading from the N-terminus, the 303-residue chain is Probable cell division protein WhiA (303 aa).

Residues 272–303 constitute a DNA-binding region (H-T-H motif); sequence SIQQLADSLSTPLTKSGVNHRLRKINKIADEL.

Belongs to the WhiA family.

In terms of biological role, involved in cell division and chromosome segregation. This chain is Probable cell division protein WhiA, found in Streptococcus pneumoniae (strain ATCC 700669 / Spain 23F-1).